Here is a 424-residue protein sequence, read N- to C-terminus: Serine--tRNA ligase (424 aa).

233 to 235 provides a ligand contact to L-serine; it reads TAE. 264–266 contacts ATP; sequence RRE. Glu287 is an L-serine binding site. Residue 351–354 coordinates ATP; the sequence is EISS. Ser386 lines the L-serine pocket.

This sequence belongs to the class-II aminoacyl-tRNA synthetase family. Type-1 seryl-tRNA synthetase subfamily. As to quaternary structure, homodimer. The tRNA molecule binds across the dimer.

It is found in the cytoplasm. It carries out the reaction tRNA(Ser) + L-serine + ATP = L-seryl-tRNA(Ser) + AMP + diphosphate + H(+). The catalysed reaction is tRNA(Sec) + L-serine + ATP = L-seryl-tRNA(Sec) + AMP + diphosphate + H(+). Its pathway is aminoacyl-tRNA biosynthesis; selenocysteinyl-tRNA(Sec) biosynthesis; L-seryl-tRNA(Sec) from L-serine and tRNA(Sec): step 1/1. Catalyzes the attachment of serine to tRNA(Ser). Is also able to aminoacylate tRNA(Sec) with serine, to form the misacylated tRNA L-seryl-tRNA(Sec), which will be further converted into selenocysteinyl-tRNA(Sec). The polypeptide is Serine--tRNA ligase (Pseudothermotoga lettingae (strain ATCC BAA-301 / DSM 14385 / NBRC 107922 / TMO) (Thermotoga lettingae)).